The sequence spans 91 residues: Alpha-defensin 31 (91 aa).

The N-terminal stretch at 1–19 (MKKLVLLFALVLLAFQVQA) is a signal peptide. The propeptide occupies 20–65 (DSIQNTDEETKTEEQQGEEDQAVSVSFGDPQGSGLQDAALGWGRRC). The tract at residues 22-55 (IQNTDEETKTEEQQGEEDQAVSVSFGDPQGSGLQ) is disordered. Repeat copies occupy residues 65–67 (CPR), 68–70 (CPP), 71–73 (CPR), 77–79 (CPR), 80–82 (CPT), and 83–85 (CPR). A 6 X 3 AA tandem repeats of C-P-X region spans residues 65–85 (CPRCPPCPRCSWCPRCPTCPR).

Belongs to the alpha-defensin family. In terms of tissue distribution, paneth cells of the small bowel.

The protein localises to the secreted. Apparent precursor of a secreted, cationic, proline- and cysteine-rich peptide that contains Cys-Pro-Xaa repeats. Unlike cryptdin, the proposed mature peptide region lacks the structural motif characteristic of defensins. It may have microbicidal activities. This is Alpha-defensin 31 from Mus musculus (Mouse).